We begin with the raw amino-acid sequence, 334 residues long: MHTGTTLTQFIIEDQRHIAGASGDFTALLNDIVTAIKTISNAVNKGALIGVMGALDTENVQGETQKKLDVITNEIMIRHNEWAGHLAGMASEEMDDVYLIPNRYPLGKYLLVFDPLDGSSNVDINISVGTIFSILRAPVPGQAASMEDFLQPGTKQVCAGYALYGSSTMLVLTTGHGVNGFTLDRDIGEFVLTHPGMKIPADTREFAINASNQRFWEEPVQRYVSECLAGSTGPRNRDFNMRWVASMVAEVHRILTRGGIFMYPRDTKDPSKPGRLRLMYEASPMSFIVEQAGGLSTTGYERILDISPENLHQRVPVILGSKNEVEVVLGYHKA.

Mg(2+) is bound by residues glutamate 92, aspartate 114, leucine 116, and aspartate 117. Substrate is bound by residues 117–120 and asparagine 209; that span reads DGSS. Glutamate 281 serves as a coordination point for Mg(2+).

This sequence belongs to the FBPase class 1 family. As to quaternary structure, homotetramer. Mg(2+) serves as cofactor.

Its subcellular location is the cytoplasm. The catalysed reaction is beta-D-fructose 1,6-bisphosphate + H2O = beta-D-fructose 6-phosphate + phosphate. It functions in the pathway carbohydrate biosynthesis; gluconeogenesis. In Nitrosomonas eutropha (strain DSM 101675 / C91 / Nm57), this protein is Fructose-1,6-bisphosphatase class 1.